We begin with the raw amino-acid sequence, 588 residues long: Adenine deaminase (588 aa).

This sequence belongs to the metallo-dependent hydrolases superfamily. Adenine deaminase family. Homodimer. Mn(2+) is required as a cofactor.

The catalysed reaction is adenine + H2O + H(+) = hypoxanthine + NH4(+). In Escherichia coli O6:H1 (strain CFT073 / ATCC 700928 / UPEC), this protein is Adenine deaminase.